The primary structure comprises 192 residues: Large ribosomal subunit protein uL5 (192 aa).

It belongs to the universal ribosomal protein uL5 family. As to quaternary structure, part of the 50S ribosomal subunit; part of the 5S rRNA/L5/L18/L25 subcomplex. Contacts the 5S rRNA and the P site tRNA. Forms a bridge to the 30S subunit in the 70S ribosome.

Its function is as follows. This is one of the proteins that bind and probably mediate the attachment of the 5S RNA into the large ribosomal subunit, where it forms part of the central protuberance. In the 70S ribosome it contacts protein S13 of the 30S subunit (bridge B1b), connecting the 2 subunits; this bridge is implicated in subunit movement. Contacts the P site tRNA; the 5S rRNA and some of its associated proteins might help stabilize positioning of ribosome-bound tRNAs. In Paenarthrobacter aurescens (strain TC1), this protein is Large ribosomal subunit protein uL5.